We begin with the raw amino-acid sequence, 102 residues long: Anti-lipopolysaccharide factor (102 aa).

Cysteines 32 and 53 form a disulfide.

Functionally, binds tightly to LPS and thus specifically inhibits the LPS-mediated activation of the hemolymph coagulation. It has a strong antibacterial effect especially on the growth of Gram-negative bacteria. In Tachypleus tridentatus (Japanese horseshoe crab), this protein is Anti-lipopolysaccharide factor.